The primary structure comprises 136 residues: Protein scalloped (136 aa).

The protein localises to the nucleus. Functionally, probable transcription factor that function in the regulation of cell-specific gene expression during drosophila development, particularly in the differentiation of the nervous system. The sequence is that of Protein scalloped (SD) from Junonia coenia (Peacock butterfly).